A 133-amino-acid chain; its full sequence is Ribonuclease P protein component (133 aa).

The protein belongs to the RnpA family. As to quaternary structure, consists of a catalytic RNA component (M1 or rnpB) and a protein subunit.

The enzyme catalyses Endonucleolytic cleavage of RNA, removing 5'-extranucleotides from tRNA precursor.. Functionally, RNaseP catalyzes the removal of the 5'-leader sequence from pre-tRNA to produce the mature 5'-terminus. It can also cleave other RNA substrates such as 4.5S RNA. The protein component plays an auxiliary but essential role in vivo by binding to the 5'-leader sequence and broadening the substrate specificity of the ribozyme. The polypeptide is Ribonuclease P protein component (Corynebacterium glutamicum (strain R)).